The following is a 497-amino-acid chain: Gasdermin-E (497 aa).

The tract at residues 1-56 is membrane targeting domain; that stretch reads MFAKATRSFLREVDAEGDLIAVSNLNDSDKSQLLSLVTKKKRFWCWQRPKYQFLSV. Residue Cys45 is modified to S-(2-succinyl)cysteine. A Glycyl lysine isopeptide (Lys-Gly) (interchain with G-Cter in ubiquitin) cross-link involves residue Lys120. An S-(2-succinyl)cysteine mark is found at Cys156, Cys168, and Cys180. Lys189 participates in a covalent cross-link: Glycyl lysine isopeptide (Lys-Gly) (interchain with G-Cter in ubiquitin). 5 positions are modified to S-(2-succinyl)cysteine: Cys235, Cys371, Cys409, Cys418, and Cys491.

This sequence belongs to the gasdermin family. As to quaternary structure, homooligomer; homooligomeric ring-shaped pore complex containing 27-28 subunits when inserted in the membrane. Post-translationally, cleavage at Asp-270 by CASP3 (mature and uncleaved precursor forms) or granzyme B (GZMB) relieves autoinhibition and is sufficient to initiate pyroptosis. In terms of processing, succination by the Krebs cycle intermediate fumarate, which leads to S-(2-succinyl)cysteine residues, inhibits processing by caspases, and ability to initiate pyroptosis. Succination modification is catalyzed by a non-enzymatic reaction caused by an accumulation of fumarate. Ubiquitinated on Lys-120 and Lys-189 via 'Lys-48'-linked polyubiquitin chains, leading to proteasomal degradation. Deubiquitinated by USP48, leading to increased stability. Post-translationally, palmitoylated.

It is found in the cell membrane. The protein resides in the cytoplasm. It localises to the cytosol. With respect to regulation, the full-length protein before cleavage is inactive: intramolecular interactions between N- and C-terminal domains mediate autoinhibition in the absence of activation signal. The intrinsic pyroptosis-inducing activity is carried by the released N-terminal moiety (Gasdermin-E, N-terminal) following cleavage by CASP3 or granzyme B (GZMB). Activated by NLRP1 in the absence of GSDMD expression: NLRP1 cleaves and activates CASP8, promoting downstream activation of CASP3 and subsequent activation of GSDME. Its function is as follows. Precursor of a pore-forming protein that converts non-inflammatory apoptosis to pyroptosis. This form constitutes the precursor of the pore-forming protein: upon cleavage, the released N-terminal moiety (Gasdermin-E, N-terminal) binds to membranes and forms pores, triggering pyroptosis. Pore-forming protein produced by cleavage by CASP3 or granzyme B (GZMB), which converts non-inflammatory apoptosis to pyroptosis or promotes granzyme-mediated pyroptosis, respectively. After cleavage, moves to the plasma membrane, homooligomerizes within the membrane and forms pores of 10-15 nanometers (nm) of inner diameter, allowing the release of mature interleukins (IL1B and IL16) and triggering pyroptosis. Binds to inner leaflet lipids, bisphosphorylated phosphatidylinositols, such as phosphatidylinositol (4,5)-bisphosphate. Cleavage by CASP3 switches CASP3-mediated apoptosis induced by TNF or danger signals, such as chemotherapy drugs, to pyroptosis. Mediates secondary necrosis downstream of the mitochondrial apoptotic pathway and CASP3 activation as well as in response to viral agents. Exhibits bactericidal activity. Cleavage by GZMB promotes tumor suppressor activity by triggering robust anti-tumor immunity. Suppresses tumors by mediating granzyme-mediated pyroptosis in target cells of natural killer (NK) cells: cleavage by granzyme B (GZMB), delivered to target cells from NK-cells, triggers pyroptosis of tumor cells and tumor suppression. May play a role in the p53/TP53-regulated cellular response to DNA damage. This chain is Gasdermin-E, found in Equus caballus (Horse).